A 428-amino-acid chain; its full sequence is Dihydroorotase (428 aa).

His59 and His61 together coordinate Zn(2+). Residues 61–63 (HLR) and Asn93 contribute to the substrate site. The Zn(2+) site is built by Asp151, His178, and His231. Asn277 lines the substrate pocket. Asp304 lines the Zn(2+) pocket. Asp304 is an active-site residue. Residues His308 and 322–323 (FG) each bind substrate.

It belongs to the metallo-dependent hydrolases superfamily. DHOase family. Class I DHOase subfamily. Requires Zn(2+) as cofactor.

It carries out the reaction (S)-dihydroorotate + H2O = N-carbamoyl-L-aspartate + H(+). It participates in pyrimidine metabolism; UMP biosynthesis via de novo pathway; (S)-dihydroorotate from bicarbonate: step 3/3. Its function is as follows. Catalyzes the reversible cyclization of carbamoyl aspartate to dihydroorotate. This Bacillus cereus (strain B4264) protein is Dihydroorotase.